A 119-amino-acid chain; its full sequence is Fluoride-specific ion channel FluC 2 (119 aa).

2 helical membrane-spanning segments follow: residues 1 to 21 (MIFA…ALTS) and 44 to 64 (GAFF…YAFL). Residues Gly70 and Thr73 each contribute to the Na(+) site. A helical transmembrane segment spans residues 98–118 (LLASYLGGAVLLTCGYYLGSL).

The protein belongs to the fluoride channel Fluc/FEX (TC 1.A.43) family.

The protein localises to the cell membrane. The catalysed reaction is fluoride(in) = fluoride(out). Na(+) is not transported, but it plays an essential structural role and its presence is essential for fluoride channel function. Functionally, fluoride-specific ion channel. Important for reducing fluoride concentration in the cell, thus reducing its toxicity. The protein is Fluoride-specific ion channel FluC 2 of Lactobacillus delbrueckii subsp. bulgaricus (strain ATCC 11842 / DSM 20081 / BCRC 10696 / JCM 1002 / NBRC 13953 / NCIMB 11778 / NCTC 12712 / WDCM 00102 / Lb 14).